A 386-amino-acid chain; its full sequence is Putative membrane-bound transacylase BcsY (386 aa).

10 helical membrane passes run 37 to 57, 91 to 111, 118 to 138, 156 to 176, 181 to 201, 237 to 257, 258 to 278, 290 to 310, 322 to 342, and 362 to 382; these read LAIALVVLFHAGWLKGGFIGV, LLPALLCMVALVSAGMLWWVL, IALNGAYALVYLSNIWASGHV, LSLEMQFYAIIFIMALLLPLT, LVLSAIFSASAAYCAYAWHTG, AVYAAAVAVIVGAGLFYPLSY, ACPSWMTVFPCGAVVLIIMLP, LSPLGVISYSVYLWHWPGIVV, AMMAGVLALVMVVSLLSYVLV, and AALLVAACLGLAAVLAYISHV.

The protein belongs to the acyltransferase 3 family.

Its subcellular location is the cell inner membrane. It participates in glycan metabolism; bacterial cellulose biosynthesis. May acylate a glucose moiety into cellulose fibrils, in cooperation with BcsABII and BcsCII. In Komagataeibacter xylinus (Gluconacetobacter xylinus), this protein is Putative membrane-bound transacylase BcsY (bcsY).